Reading from the N-terminus, the 597-residue chain is Cytosolic phospholipase A2 gamma (597 aa).

A PLA2c domain is found at 1 to 597 (MELSSGVCPA…FKKSHNISKD (597 aa)). Ser83 acts as the Nucleophile in catalysis. Asp417 (proton acceptor) is an active-site residue. The interval 576–597 (RVKDPQGSQTVEFKKSHNISKD) is disordered. Residues 587–597 (EFKKSHNISKD) show a composition bias toward basic and acidic residues.

In terms of tissue distribution, highly expressed in ovary, where it localizes to oocytes in preantral and antral stage follicles (at protein level). Not detected in other tissues tested.

Its subcellular location is the nucleus. It is found in the nucleoplasm. It localises to the nucleus envelope. The protein resides in the cytoplasm. The protein localises to the cell cortex. Its subcellular location is the cytoskeleton. It is found in the spindle. The catalysed reaction is a 1,2-diacyl-sn-glycero-3-phosphocholine + H2O = a 1-acyl-sn-glycero-3-phosphocholine + a fatty acid + H(+). It catalyses the reaction a 1-O-alkyl-2-acyl-sn-glycero-3-phosphocholine + H2O = a 1-O-alkyl-sn-glycero-3-phosphocholine + a fatty acid + H(+). It carries out the reaction 1,2-dihexadecanoyl-sn-glycero-3-phosphocholine + H2O = 1-hexadecanoyl-sn-glycero-3-phosphocholine + hexadecanoate + H(+). The enzyme catalyses 1-hexadecanoyl-2-(9Z-octadecenoyl)-sn-glycero-3-phosphocholine + H2O = 1-hexadecanoyl-sn-glycero-3-phosphocholine + (9Z)-octadecenoate + H(+). The catalysed reaction is 1-hexadecanoyl-2-(9Z,12Z-octadecadienoyl)-sn-glycero-3-phosphocholine + H2O = (9Z,12Z)-octadecadienoate + 1-hexadecanoyl-sn-glycero-3-phosphocholine + H(+). It catalyses the reaction 1-hexadecanoyl-2-(5Z,8Z,11Z,14Z-eicosatetraenoyl)-sn-glycero-3-phosphocholine + H2O = 1-hexadecanoyl-sn-glycero-3-phosphocholine + (5Z,8Z,11Z,14Z)-eicosatetraenoate + H(+). It carries out the reaction 1-O-hexadecyl-2-(5Z,8Z,11Z,14Z)-eicosatetraenoyl-sn-glycero-3-phosphocholine + H2O = 1-O-hexadecyl-sn-glycero-3-phosphocholine + (5Z,8Z,11Z,14Z)-eicosatetraenoate + H(+). The enzyme catalyses 1-hexadecanoyl-2-(5Z,8Z,11Z,14Z-eicosatetraenoyl)-sn-glycero-3-phosphocholine + H2O = 2-(5Z,8Z,11Z,14Z)-eicosatetraenoyl-sn-glycero-3-phosphocholine + hexadecanoate + H(+). The catalysed reaction is a 1-acyl-sn-glycero-3-phosphocholine + H2O = sn-glycerol 3-phosphocholine + a fatty acid + H(+). It catalyses the reaction 1-hexadecanoyl-sn-glycero-3-phosphocholine + H2O = sn-glycerol 3-phosphocholine + hexadecanoate + H(+). It carries out the reaction 2 1-hexadecanoyl-sn-glycero-3-phosphocholine = 1,2-dihexadecanoyl-sn-glycero-3-phosphocholine + sn-glycerol 3-phosphocholine. The enzyme catalyses 1-hexadecanoyl-sn-glycero-3-phosphoethanolamine + 1-hexadecanoyl-sn-glycero-3-phosphocholine = 1,2-dihexadecanoyl-sn-glycero-3-phosphoethanolamine + sn-glycerol 3-phosphocholine. The catalysed reaction is 1-hexadecanoyl-sn-glycero-3-phosphoethanolamine + 1-hexadecanoyl-sn-glycero-3-phosphocholine = sn-glycero-3-phosphoethanolamine + 1,2-dihexadecanoyl-sn-glycero-3-phosphocholine. It catalyses the reaction 2 1-hexadecanoyl-sn-glycero-3-phosphoethanolamine = 1,2-dihexadecanoyl-sn-glycero-3-phosphoethanolamine + sn-glycero-3-phosphoethanolamine. It carries out the reaction 1-O-hexadecyl-sn-glycero-3-phosphocholine + 1-hexadecanoyl-sn-glycero-3-phosphocholine = 1-O-hexadecyl-2-hexadecanoyl-sn-glycero-3-phosphocholine + sn-glycerol 3-phosphocholine. The enzyme catalyses a 1-O-(1Z-alkenyl)-sn-glycero-3-phosphoethanolamine + 1-hexadecanoyl-sn-glycero-3-phosphocholine = 1-O-(1Z)-alkenyl-2-hexadecanoyl-sn-glycero-3-phosphoethanolamine + sn-glycerol 3-phosphocholine. The catalysed reaction is 1-O-hexadecyl-sn-glycero-3-phosphocholine + 1-hexadecanoyl-sn-glycero-3-phosphoethanolamine = 1-O-hexadecyl-2-hexadecanoyl-sn-glycero-3-phosphocholine + sn-glycero-3-phosphoethanolamine. It catalyses the reaction 1-octadecanoyl-2-(5Z,8Z,11Z,14Z)-eicosatetraenoyl-sn-glycero-3-phosphoethanolamine + 1-hexadecanoyl-sn-glycero-3-phosphocholine = 1-octadecanoyl-sn-glycero-3-phosphoethanolamine + 1-hexadecanoyl-2-(5Z,8Z,11Z,14Z-eicosatetraenoyl)-sn-glycero-3-phosphocholine. It carries out the reaction 1-octadecanoyl-2-(5Z,8Z,11Z,14Z)-eicosatetraenoyl-sn-glycero-3-phosphoethanolamine + 1-O-hexadecyl-sn-glycero-3-phosphocholine = 1-octadecanoyl-sn-glycero-3-phosphoethanolamine + 1-O-hexadecyl-2-(5Z,8Z,11Z,14Z)-eicosatetraenoyl-sn-glycero-3-phosphocholine. The enzyme catalyses 1-hexadecanoyl-2-(9Z,12Z-octadecadienoyl)-sn-glycero-3-phosphocholine + a 1-O-(1Z-alkenyl)-sn-glycero-3-phosphoethanolamine = 1-O-(1Z-alkenyl)-2-(9Z,12Z-octadecadienoyl)-sn-glycero-3-phosphoethanolamine + 1-hexadecanoyl-sn-glycero-3-phosphocholine. The catalysed reaction is 1-hexadecanoyl-2-(5Z,8Z,11Z,14Z-eicosatetraenoyl)-sn-glycero-3-phosphocholine + a 1-O-(1Z-alkenyl)-sn-glycero-3-phosphoethanolamine = 1-O-(1Z)-alkenyl-2-(5Z,8Z,11Z,14Z)-eicosatetraenoyl-sn-glycero-3-phosphoethanolamine + 1-hexadecanoyl-sn-glycero-3-phosphocholine. In terms of biological role, calcium-independent phospholipase, lysophospholipase and O-acyltransferase involved in phospholipid remodeling. Preferentially hydrolyzes the ester bond of the fatty acyl group attached at sn-2 position of phospholipids with choline and ethanolamine head groups, producing lysophospholipids that are used in deacylation-reacylation cycles. Transfers the sn-1 fatty acyl from one lysophospholipid molecule to the sn-2 position of another lysophospholipid to form diacyl, alkylacyl and alkenylacyl glycerophospholipids. Cleaves ester bonds but not alkyl or alkenyl ether bonds at the sn-1 position of lysophospholipids. Catalyzes sn-2 fatty acyl transfer from phospholipids to the sn-2 position of 1-O-alkyl or 1-O-alkenyl lysophospholipids with lower efficiency. The polypeptide is Cytosolic phospholipase A2 gamma (Mus musculus (Mouse)).